A 389-amino-acid chain; its full sequence is D-alanine--D-alanine ligase (389 aa).

Polar residues predominate over residues 1–12; that stretch reads MSTENLPQNPEQ. The tract at residues 1–22 is disordered; it reads MSTENLPQNPEQSPRRPPRKPR. An ATP-grasp domain is found at 169–379; the sequence is KAVFTSYGLK…YPELVDRLVQ (211 aa). 205 to 260 serves as a coordination point for ATP; that stretch reads AGEHGWPLFVKPARAGSSIGITKVDDLAGLDEAIEEARRHDPKILVEAALRGREIE. Positions 333, 346, and 348 each coordinate Mg(2+).

The protein belongs to the D-alanine--D-alanine ligase family. Mg(2+) serves as cofactor. The cofactor is Mn(2+).

It localises to the cytoplasm. It catalyses the reaction 2 D-alanine + ATP = D-alanyl-D-alanine + ADP + phosphate + H(+). It participates in cell wall biogenesis; peptidoglycan biosynthesis. Its function is as follows. Cell wall formation. The chain is D-alanine--D-alanine ligase (ddl) from Streptomyces coelicolor (strain ATCC BAA-471 / A3(2) / M145).